Here is a 575-residue protein sequence, read N- to C-terminus: Arginine--tRNA ligase (575 aa).

The 'HIGH' region signature appears at 122 to 132; that stretch reads PNVAKEMHVGH.

This sequence belongs to the class-I aminoacyl-tRNA synthetase family. Monomer.

It is found in the cytoplasm. It carries out the reaction tRNA(Arg) + L-arginine + ATP = L-arginyl-tRNA(Arg) + AMP + diphosphate. In Actinobacillus succinogenes (strain ATCC 55618 / DSM 22257 / CCUG 43843 / 130Z), this protein is Arginine--tRNA ligase.